A 223-amino-acid polypeptide reads, in one-letter code: Endonuclease V (223 aa).

Residues aspartate 45 and aspartate 113 each coordinate Mg(2+).

This sequence belongs to the endonuclease V family. Requires Mg(2+) as cofactor.

Its subcellular location is the cytoplasm. The enzyme catalyses Endonucleolytic cleavage at apurinic or apyrimidinic sites to products with a 5'-phosphate.. Its function is as follows. DNA repair enzyme involved in the repair of deaminated bases. Selectively cleaves double-stranded DNA at the second phosphodiester bond 3' to a deoxyinosine leaving behind the intact lesion on the nicked DNA. This Dehalococcoides mccartyi (strain ATCC BAA-2100 / JCM 16839 / KCTC 5957 / BAV1) protein is Endonuclease V.